The following is a 178-amino-acid chain: Flagellar transcriptional regulator FlhC (178 aa).

Residues Cys138, Cys141, Cys158, and Cys161 each coordinate Zn(2+).

Belongs to the FlhC family. As to quaternary structure, heterohexamer composed of two FlhC and four FlhD subunits. Each FlhC binds a FlhD dimer, forming a heterotrimer, and a hexamer assembles by dimerization of two heterotrimers. Zn(2+) is required as a cofactor.

The protein localises to the cytoplasm. Functions in complex with FlhD as a master transcriptional regulator that regulates transcription of several flagellar and non-flagellar operons by binding to their promoter region. Activates expression of class 2 flagellar genes, including fliA, which is a flagellum-specific sigma factor that turns on the class 3 genes. Also regulates genes whose products function in a variety of physiological pathways. The chain is Flagellar transcriptional regulator FlhC from Erwinia tasmaniensis (strain DSM 17950 / CFBP 7177 / CIP 109463 / NCPPB 4357 / Et1/99).